The primary structure comprises 448 residues: Solute carrier family 52, riboflavin transporter, member 2 (448 aa).

5 helical membrane passes run 14–34, 47–67, 79–99, 105–125, and 147–167; these read LLVA…WVEL, LPSY…VVTL, VPIQ…APLW, VAGQ…ALAC, and FFLG…VQGV. N-linked (GlcNAc...) asparagine glycosylation is present at asparagine 178. Residues 198–218 traverse the membrane as a helical segment; sequence WALTALLVTSAAAFQGLLLLL. The interval 228–267 is disordered; the sequence is GAGPELPLGSPGAEEEEKEEEEALPLQEPPSQAAGTIPGP. A compositionally biased stretch (acidic residues) spans 240–250; that stretch reads AEEEEKEEEEA. A run of 5 helical transmembrane segments spans residues 280-300, 315-335, 342-362, 369-389, and 407-427; these read AFLL…LPAV, LAVV…MGVL, LVGL…LAIL, VGTT…LCVF, and ALLA…GTMF.

This sequence belongs to the riboflavin transporter family.

The protein localises to the cell membrane. The enzyme catalyses riboflavin(in) = riboflavin(out). Its activity is regulated as follows. Riboflavin transport is Na(+)-independent but moderately pH-sensitive. Activity is strongly inhibited by riboflavin analogs, such as lumiflavin. Weakly inhibited by flavin adenine dinucleotide (FAD) and flavin mononucleotide (FMN). Functionally, plasma membrane transporter mediating the uptake by cells of the water soluble vitamin B2/riboflavin that plays a key role in biochemical oxidation-reduction reactions of the carbohydrate, lipid, and amino acid metabolism. May also act as a receptor for 4-hydroxybutyrate. In terms of biological role, (Microbial infection) In case of infection by retroviruses, acts as a cell receptor to retroviral envelopes similar to the porcine endogenous retrovirus (PERV-A). This Papio hamadryas (Hamadryas baboon) protein is Solute carrier family 52, riboflavin transporter, member 2 (SLC52A2).